A 55-amino-acid polypeptide reads, in one-letter code: Large ribosomal subunit protein bL33 (55 aa).

The protein belongs to the bacterial ribosomal protein bL33 family.

In Erythrobacter litoralis (strain HTCC2594), this protein is Large ribosomal subunit protein bL33.